We begin with the raw amino-acid sequence, 275 residues long: NH(3)-dependent NAD(+) synthetase (275 aa).

Position 47–54 (G47–S54) interacts with ATP. D53 is a binding site for Mg(2+). R139 is a deamido-NAD(+) binding site. Residue T159 coordinates ATP. Residue E164 participates in Mg(2+) binding. Residues K172 and D179 each contribute to the deamido-NAD(+) site. The ATP site is built by K188 and T210. Residue H259–K260 participates in deamido-NAD(+) binding.

This sequence belongs to the NAD synthetase family. Homodimer.

It carries out the reaction deamido-NAD(+) + NH4(+) + ATP = AMP + diphosphate + NAD(+) + H(+). Its pathway is cofactor biosynthesis; NAD(+) biosynthesis; NAD(+) from deamido-NAD(+) (ammonia route): step 1/1. Its function is as follows. Catalyzes the ATP-dependent amidation of deamido-NAD to form NAD. Uses ammonia as a nitrogen source. In Staphylococcus epidermidis (strain ATCC 35984 / DSM 28319 / BCRC 17069 / CCUG 31568 / BM 3577 / RP62A), this protein is NH(3)-dependent NAD(+) synthetase.